A 306-amino-acid chain; its full sequence is MPRILDGNRVRDEIKGELKPRIAALAAHGRPPGLAVVLVGNNPASEIYVRNKIKTCHDLGIYSESITPPDTISTEELLAIVQGLNARAEIDGILVQLPLPPQVDTKRILMAVSPAKDVDGFHPCNVGALVANLPAPRACTPAGIMELLKRGGIPIAGQRAVVVGRSDIVGKPVAMLLLHEHATVTICHSKTPDLKSLCREADILVAAIGRAAMITGEFIKPGATVIDVGTNHVADREKAARIYRNSPEKMANFDKRGNLLIGDVDPVGVVEKAGAYTPVPGGVGPLTIAMLMVNTVASAERRAGVC.

NADP(+) is bound by residues glycine 164–serine 166, serine 189, and threonine 230.

It belongs to the tetrahydrofolate dehydrogenase/cyclohydrolase family. In terms of assembly, homodimer.

It catalyses the reaction (6R)-5,10-methylene-5,6,7,8-tetrahydrofolate + NADP(+) = (6R)-5,10-methenyltetrahydrofolate + NADPH. It carries out the reaction (6R)-5,10-methenyltetrahydrofolate + H2O = (6R)-10-formyltetrahydrofolate + H(+). It participates in one-carbon metabolism; tetrahydrofolate interconversion. Functionally, catalyzes the oxidation of 5,10-methylenetetrahydrofolate to 5,10-methenyltetrahydrofolate and then the hydrolysis of 5,10-methenyltetrahydrofolate to 10-formyltetrahydrofolate. The sequence is that of Bifunctional protein FolD from Solibacter usitatus (strain Ellin6076).